The chain runs to 77 residues: Putative ankyrin repeat protein RC0956 (77 aa).

One copy of the ANK repeat lies at 8-38; sequence TDISPLMLASEYGQVTIVKYLLKHGNYNVKG.

The polypeptide is Putative ankyrin repeat protein RC0956 (Rickettsia conorii (strain ATCC VR-613 / Malish 7)).